The following is a 621-amino-acid chain: Rab11 family-interacting protein 4A (621 aa).

EF-hand domains lie at 14 to 49 and 47 to 82; these read AFLKKLKEVFDVCDEDADGYIRVEHFVDLGLQFGQG and GQGDEVKKFAKYLDPNAHGRINFKDFCHGVFAIKGC. Ca(2+)-binding residues include aspartate 27, aspartate 29, aspartate 31, tyrosine 33, histidine 38, aspartate 60, asparagine 62, arginine 66, and aspartate 71. Disordered regions lie at residues 132–172 and 203–243; these read YSDE…KEEG and DYGE…GQTP. Low complexity predominate over residues 151 to 161; sequence AADSGAGSESS. Basic and acidic residues predominate over residues 162 to 172; sequence EGGRQDDKEEG. A compositionally biased stretch (polar residues) spans 225–243; sequence TNGFSDLGSSLPSSAGQTP. The stretch at 348–556 forms a coiled coil; sequence DLKSKLKQEN…LNGQILSLSL (209 aa). The FIP-RBD domain occupies 558–620; it reads EAKNLFACHT…DHNPSILEIK (63 aa).

Homodimer. Forms a complex with Rab11 (rab11a or rab11b) and arf6. As to expression, isoform 1 is predominantly expressed in neural tissues. Isoform B is expressed ubiquitously. In the developing retina, it is expressed in progenitors throughout the retina at early stages and becomes restricted to the ganglion cell layer and ciliary marginal zone as differentiation proceeds.

It localises to the recycling endosome membrane. The protein resides in the cleavage furrow. The protein localises to the midbody. Its subcellular location is the cytoplasmic vesicle. Acts as a regulator of endocytic traffic by participating in membrane delivery. Required for the abscission step in cytokinesis, possibly by acting as an 'address tag' delivering recycling endosome membranes to the cleavage furrow during late cytokinesis. May play a role in differentiation during retinal development. This chain is Rab11 family-interacting protein 4A (rab11fip4a), found in Danio rerio (Zebrafish).